The primary structure comprises 346 residues: Holliday junction branch migration complex subunit RuvB (346 aa).

Positions 1–182 are large ATPase domain (RuvB-L); sequence MSEAARLIAP…FGIPVRLNFY (182 aa). ATP-binding positions include Arg22, Gly63, Lys66, Thr67, Thr68, 129-131, Arg172, Tyr182, and Arg219; that span reads EDF. Thr67 contributes to the Mg(2+) binding site. The tract at residues 183–253 is small ATPAse domain (RuvB-S); that stretch reads TVEELELIVR…IADEALTRLL (71 aa). The interval 256 to 346 is head domain (RuvB-H); the sequence is SMGLDQLDRR…SQFRLTLEDD (91 aa). 3 residues coordinate DNA: Arg292, Arg311, and Arg316.

The protein belongs to the RuvB family. As to quaternary structure, homohexamer. Forms an RuvA(8)-RuvB(12)-Holliday junction (HJ) complex. HJ DNA is sandwiched between 2 RuvA tetramers; dsDNA enters through RuvA and exits via RuvB. An RuvB hexamer assembles on each DNA strand where it exits the tetramer. Each RuvB hexamer is contacted by two RuvA subunits (via domain III) on 2 adjacent RuvB subunits; this complex drives branch migration. In the full resolvosome a probable DNA-RuvA(4)-RuvB(12)-RuvC(2) complex forms which resolves the HJ.

It is found in the cytoplasm. The catalysed reaction is ATP + H2O = ADP + phosphate + H(+). In terms of biological role, the RuvA-RuvB-RuvC complex processes Holliday junction (HJ) DNA during genetic recombination and DNA repair, while the RuvA-RuvB complex plays an important role in the rescue of blocked DNA replication forks via replication fork reversal (RFR). RuvA specifically binds to HJ cruciform DNA, conferring on it an open structure. The RuvB hexamer acts as an ATP-dependent pump, pulling dsDNA into and through the RuvAB complex. RuvB forms 2 homohexamers on either side of HJ DNA bound by 1 or 2 RuvA tetramers; 4 subunits per hexamer contact DNA at a time. Coordinated motions by a converter formed by DNA-disengaged RuvB subunits stimulates ATP hydrolysis and nucleotide exchange. Immobilization of the converter enables RuvB to convert the ATP-contained energy into a lever motion, pulling 2 nucleotides of DNA out of the RuvA tetramer per ATP hydrolyzed, thus driving DNA branch migration. The RuvB motors rotate together with the DNA substrate, which together with the progressing nucleotide cycle form the mechanistic basis for DNA recombination by continuous HJ branch migration. Branch migration allows RuvC to scan DNA until it finds its consensus sequence, where it cleaves and resolves cruciform DNA. The protein is Holliday junction branch migration complex subunit RuvB of Rhizobium meliloti (strain 1021) (Ensifer meliloti).